Here is a 275-residue protein sequence, read N- to C-terminus: Dermonecrotic toxin LhSicTox-alphaIV2 (275 aa).

His5 is an active-site residue. Residues Glu25 and Asp27 each coordinate Mg(2+). His41 functions as the Nucleophile in the catalytic mechanism. Intrachain disulfides connect Cys45/Cys51 and Cys47/Cys192. Asp85 is a Mg(2+) binding site.

This sequence belongs to the arthropod phospholipase D family. Class II subfamily. The cofactor is Mg(2+). In terms of tissue distribution, expressed by the venom gland.

It is found in the secreted. It carries out the reaction an N-(acyl)-sphingosylphosphocholine = an N-(acyl)-sphingosyl-1,3-cyclic phosphate + choline. The catalysed reaction is an N-(acyl)-sphingosylphosphoethanolamine = an N-(acyl)-sphingosyl-1,3-cyclic phosphate + ethanolamine. The enzyme catalyses a 1-acyl-sn-glycero-3-phosphocholine = a 1-acyl-sn-glycero-2,3-cyclic phosphate + choline. It catalyses the reaction a 1-acyl-sn-glycero-3-phosphoethanolamine = a 1-acyl-sn-glycero-2,3-cyclic phosphate + ethanolamine. Functionally, dermonecrotic toxins cleave the phosphodiester linkage between the phosphate and headgroup of certain phospholipids (sphingolipid and lysolipid substrates), forming an alcohol (often choline) and a cyclic phosphate. This toxin acts on sphingomyelin (SM). It may also act on ceramide phosphoethanolamine (CPE), lysophosphatidylcholine (LPC) and lysophosphatidylethanolamine (LPE), but not on lysophosphatidylserine (LPS), and lysophosphatidylglycerol (LPG). It acts by transphosphatidylation, releasing exclusively cyclic phosphate products as second products. Induces dermonecrosis, hemolysis, increased vascular permeability, edema, inflammatory response, and platelet aggregation. The chain is Dermonecrotic toxin LhSicTox-alphaIV2 from Loxosceles hirsuta (Recluse spider).